The chain runs to 142 residues: Large ribosomal subunit protein uL11 (142 aa).

The protein belongs to the universal ribosomal protein uL11 family. As to quaternary structure, part of the ribosomal stalk of the 50S ribosomal subunit. Interacts with L10 and the large rRNA to form the base of the stalk. L10 forms an elongated spine to which L12 dimers bind in a sequential fashion forming a multimeric L10(L12)X complex. In terms of processing, one or more lysine residues are methylated.

In terms of biological role, forms part of the ribosomal stalk which helps the ribosome interact with GTP-bound translation factors. The sequence is that of Large ribosomal subunit protein uL11 from Nitrobacter winogradskyi (strain ATCC 25391 / DSM 10237 / CIP 104748 / NCIMB 11846 / Nb-255).